We begin with the raw amino-acid sequence, 516 residues long: Delta(24)-sterol reductase (516 aa).

Residues 1-22 (MEPAVSLAVCALLFLLWVRVKG) form the signal peptide. Residues 23 to 31 (LEFVLIHQR) lie on the Lumenal side of the membrane. A helical transmembrane segment spans residues 32–52 (WVFVCLFLLPLSLIFDIYYYV). Residues 53-516 (RAWVVFKLSS…YDKICKAARH (464 aa)) lie on the Cytoplasmic side of the membrane. The 177-residue stretch at 58-234 (FKLSSAPRLH…VAAEIRIIPA (177 aa)) folds into the FAD-binding PCMH-type domain. Residue 163-175 (TVGGLIMGTGIES) coordinates FAD.

The protein belongs to the FAD-binding oxidoreductase/transferase type 4 family. As to quaternary structure, interacts with DHCR7; this interaction regulates DHCR7 activity. The cofactor is FAD.

It localises to the endoplasmic reticulum membrane. Its subcellular location is the golgi apparatus membrane. The catalysed reaction is cholesterol + NADP(+) = desmosterol + NADPH + H(+). The enzyme catalyses lanosterol + NADPH + H(+) = 24,25-dihydrolanosterol + NADP(+). It carries out the reaction 5alpha-cholest-8-en-3beta-ol + NADP(+) = zymosterol + NADPH + H(+). It functions in the pathway steroid biosynthesis; cholesterol biosynthesis. Its function is as follows. Catalyzes the reduction of the delta-24 double bond of sterol intermediates during cholesterol biosynthesis. In addition to its cholesterol-synthesizing activity, can protect cells from oxidative stress by reducing caspase 3 activity during apoptosis induced by oxidative stress. Also protects against amyloid-beta peptide-induced apoptosis. The protein is Delta(24)-sterol reductase (Dhcr24) of Rattus norvegicus (Rat).